The primary structure comprises 101 residues: Protein translation factor SUI1 homolog (101 aa).

This sequence belongs to the SUI1 family.

The chain is Protein translation factor SUI1 homolog from Methanoregula boonei (strain DSM 21154 / JCM 14090 / 6A8).